Here is a 421-residue protein sequence, read N- to C-terminus: UDP-N-acetylglucosamine 1-carboxyvinyltransferase 1 (421 aa).

Residue 22-23 (KN) coordinates phosphoenolpyruvate. Residue arginine 95 participates in UDP-N-acetyl-alpha-D-glucosamine binding. Residue cysteine 119 is the Proton donor of the active site. A 2-(S-cysteinyl)pyruvic acid O-phosphothioketal modification is found at cysteine 119. UDP-N-acetyl-alpha-D-glucosamine-binding positions include 124–128 (RPIEQ), aspartate 308, and valine 330.

It belongs to the EPSP synthase family. MurA subfamily.

Its subcellular location is the cytoplasm. It catalyses the reaction phosphoenolpyruvate + UDP-N-acetyl-alpha-D-glucosamine = UDP-N-acetyl-3-O-(1-carboxyvinyl)-alpha-D-glucosamine + phosphate. The protein operates within cell wall biogenesis; peptidoglycan biosynthesis. Its function is as follows. Cell wall formation. Adds enolpyruvyl to UDP-N-acetylglucosamine. This chain is UDP-N-acetylglucosamine 1-carboxyvinyltransferase 1, found in Staphylococcus aureus (strain MRSA252).